Here is a 154-residue protein sequence, read N- to C-terminus: uncharacterized protein (154 aa).

In terms of biological role, this protein may be involved in virus assembly. Essential for virus function. This is an uncharacterized protein from Saccharolobus solfataricus (Sulfolobus solfataricus).